We begin with the raw amino-acid sequence, 785 residues long: Endonuclease MutS2 (785 aa).

332–339 contacts ATP; sequence GPNTGGKT. A Smr domain is found at 710–785; the sequence is IDLRGLDAEE…GDGATIVELK (76 aa).

This sequence belongs to the DNA mismatch repair MutS family. MutS2 subfamily. As to quaternary structure, homodimer. Binds to stalled ribosomes, contacting rRNA.

Functionally, endonuclease that is involved in the suppression of homologous recombination and thus may have a key role in the control of bacterial genetic diversity. Acts as a ribosome collision sensor, splitting the ribosome into its 2 subunits. Detects stalled/collided 70S ribosomes which it binds and splits by an ATP-hydrolysis driven conformational change. Acts upstream of the ribosome quality control system (RQC), a ribosome-associated complex that mediates the extraction of incompletely synthesized nascent chains from stalled ribosomes and their subsequent degradation. Probably generates substrates for RQC. The chain is Endonuclease MutS2 from Clostridium botulinum (strain Eklund 17B / Type B).